The primary structure comprises 500 residues: MQVLILLSLAFLASCVVAYSRRRPGGRGAGDLPPGPPRLPIIGNMLQLGQNPHKSLAHLAKTYGPLMSLKLGNQFVVVVSSPEMAREVLQRHGLVFSRPFTPIAVQILGHGEVSMNMLPATSPIWKKIRKIAREKLFSNQALHATRAVRRERLRKLADYVGRCSGAMNVGEATFTTMSNLMFATLFSVEITQYADSDSDSGVNKKFREHVNAITRYMGVPNIADFFPIFAPFDPQGLRRKLTYHLGSLLELVQSLIEQRLRARNAATYRKKDDFLEMLLDLSEGDEYDLSVNEIKHLCVDLIIAGSDTSAATTEWAMVELLLHPDKLAKLKAELKSVVGDKSIIEESDISKLPYLQATVKEVLRYHPAAPLLAPHLAEEETQLNGYIIPKNTKIFINDWTISRDPSIWKNPEMFEPERFLNNDIDFCGQHFELIPFGSGRRICPGLPLASRMLHCMVATLCHNFDWELEKGTESKQLQREDVFGLALQKKIPLRAIPIKV.

Residues 4–24 (LILLSLAFLASCVVAYSRRRP) traverse the membrane as a helical segment. A heme-binding site is contributed by C443.

It belongs to the cytochrome P450 family. Heme is required as a cofactor. Expressed in leaf glandular trichomes.

It is found in the membrane. The enzyme catalyses 11-hydroxyferruginol + 3 reduced [NADPH--hemoprotein reductase] + 3 O2 = carnosate + 3 oxidized [NADPH--hemoprotein reductase] + 4 H2O + 4 H(+). The catalysed reaction is miltiradiene + 2 reduced [NADPH--hemoprotein reductase] + 2 O2 = miltiradien-20-al + 2 oxidized [NADPH--hemoprotein reductase] + 3 H2O + 2 H(+). It carries out the reaction ferruginol + 3 reduced [NADPH--hemoprotein reductase] + 3 O2 = pisiferate + 3 oxidized [NADPH--hemoprotein reductase] + 4 H2O + 4 H(+). The protein operates within secondary metabolite biosynthesis; terpenoid biosynthesis. In terms of biological role, monooxygenase involved in the biosynthesis of carnosate, a potent antioxidant labdane-related diterpene natural product. Catalyzes the oxidation of 11-hydroxyferruginol to produce carnosate. Mediates the conversion of miltiradien into miltiradien-20-al. Also involved in the production of pisiferic acid and derivative products from ferruginol. The sequence is that of Carnosic acid synthase from Salvia pomifera (Apple sage).